The primary structure comprises 310 residues: Protein-L-isoaspartate O-methyltransferase (310 aa).

2 disordered regions span residues 1 to 46 (MSGE…DKPA) and 60 to 79 (ALPG…TVLK). The segment covering 14-34 (EDLKRAPRKSEVRSGSGERHA) has biased composition (basic and acidic residues). The segment covering 35 to 46 (ASAVPKAADKPA) has biased composition (low complexity). The active site involves serine 157.

This sequence belongs to the methyltransferase superfamily. L-isoaspartyl/D-aspartyl protein methyltransferase family.

The protein resides in the cytoplasm. The catalysed reaction is [protein]-L-isoaspartate + S-adenosyl-L-methionine = [protein]-L-isoaspartate alpha-methyl ester + S-adenosyl-L-homocysteine. In terms of biological role, catalyzes the methyl esterification of L-isoaspartyl residues in peptides and proteins that result from spontaneous decomposition of normal L-aspartyl and L-asparaginyl residues. It plays a role in the repair and/or degradation of damaged proteins. In Burkholderia ambifaria (strain ATCC BAA-244 / DSM 16087 / CCUG 44356 / LMG 19182 / AMMD) (Burkholderia cepacia (strain AMMD)), this protein is Protein-L-isoaspartate O-methyltransferase.